Reading from the N-terminus, the 290-residue chain is Protease HtpX homolog (290 aa).

The next 2 helical transmembrane spans lie at 4-24 (ILLF…VASL) and 39-59 (TALL…SLLI). H144 is a binding site for Zn(2+). Residue E145 is part of the active site. H148 contributes to the Zn(2+) binding site. A run of 2 helical transmembrane segments spans residues 159–179 (LIQG…GYAV) and 199–219 (VSTI…VAWF). A Zn(2+)-binding site is contributed by E224.

It belongs to the peptidase M48B family. Zn(2+) is required as a cofactor.

The protein localises to the cell inner membrane. The protein is Protease HtpX homolog of Variovorax paradoxus (strain S110).